We begin with the raw amino-acid sequence, 108 residues long: CRISPR-associated endoribonuclease Cas2 (108 aa).

Residue aspartate 15 coordinates Mg(2+).

It belongs to the CRISPR-associated endoribonuclease Cas2 protein family. As to quaternary structure, homodimer, forms a heterotetramer with a Cas1 homodimer. Mg(2+) serves as cofactor.

CRISPR (clustered regularly interspaced short palindromic repeat), is an adaptive immune system that provides protection against mobile genetic elements (viruses, transposable elements and conjugative plasmids). CRISPR clusters contain sequences complementary to antecedent mobile elements and target invading nucleic acids. CRISPR clusters are transcribed and processed into CRISPR RNA (crRNA). Functions as a ssRNA-specific endoribonuclease. Involved in the integration of spacer DNA into the CRISPR cassette. The chain is CRISPR-associated endoribonuclease Cas2 from Paracidovorax avenae (strain ATCC 19860 / DSM 7227 / CCUG 15838 / JCM 20985 / LMG 2117 / NCPPB 1011) (Acidovorax avenae).